A 226-amino-acid polypeptide reads, in one-letter code: Fibrillarin-like rRNA/tRNA 2'-O-methyltransferase (226 aa).

Residues 85–86 (TT), 104–105 (EF), 129–130 (DA), and 149–152 (DVAQ) contribute to the S-adenosyl-L-methionine site.

The protein belongs to the methyltransferase superfamily. Fibrillarin family. Interacts with nop5. Component of box C/D small ribonucleoprotein (sRNP) particles that contain rpl7ae, FlpA and nop5, plus a guide RNA.

Its function is as follows. Involved in pre-rRNA and tRNA processing. Utilizes the methyl donor S-adenosyl-L-methionine to catalyze the site-specific 2'-hydroxyl methylation of ribose moieties in rRNA and tRNA. Site specificity is provided by a guide RNA that base pairs with the substrate. Methylation occurs at a characteristic distance from the sequence involved in base pairing with the guide RNA. The polypeptide is Fibrillarin-like rRNA/tRNA 2'-O-methyltransferase (Thermococcus onnurineus (strain NA1)).